Here is a 262-residue protein sequence, read N- to C-terminus: Flap endonuclease Xni (262 aa).

Aspartate 105 is a Mg(2+) binding site. The 5'-3' exonuclease domain occupies serine 164–asparagine 251. Positions 172, 173, 181, 183, and 186 each coordinate K(+). Residues glycine 185 to serine 190 are interaction with DNA.

The protein belongs to the Xni family. Requires Mg(2+) as cofactor. The cofactor is K(+).

In terms of biological role, has flap endonuclease activity. During DNA replication, flap endonucleases cleave the 5'-overhanging flap structure that is generated by displacement synthesis when DNA polymerase encounters the 5'-end of a downstream Okazaki fragment. The protein is Flap endonuclease Xni of Shewanella sp. (strain W3-18-1).